An 853-amino-acid chain; its full sequence is DNA mismatch repair protein MutS (853 aa).

ATP is bound at residue 616–623 (GPNMGGKS).

The protein belongs to the DNA mismatch repair MutS family.

Its function is as follows. This protein is involved in the repair of mismatches in DNA. It is possible that it carries out the mismatch recognition step. This protein has a weak ATPase activity. In Erwinia tasmaniensis (strain DSM 17950 / CFBP 7177 / CIP 109463 / NCPPB 4357 / Et1/99), this protein is DNA mismatch repair protein MutS.